The primary structure comprises 583 residues: Selenocysteine-specific elongation factor (583 aa).

The region spanning 5–203 (RVNVNVGVLG…LLKSQISIPT (199 aa)) is the tr-type G domain. Residues 14–21 (GHIDSGKT) are G1. Positions 19, 21, and 22 each coordinate GTP. Residue threonine 21 coordinates Mg(2+). A G2 region spans residues 46 to 50 (GITLD). Positions 48 and 78 each coordinate Mg(2+). Residues 78 to 81 (DCPG) are G3. The G4 stretch occupies residues 132–135 (NKID). GTP contacts are provided by aspartate 135 and lysine 173. The interval 171 to 173 (AAK) is G5. The interval 371–390 (MPTATEGDDEADPKAGHAPG) is disordered. Serine 524 carries the post-translational modification Phosphoserine. The segment at 528 to 562 (KKILTPTLKKRSRAGRGETTKPEEGTERPEPIQPV) is disordered. Threonine 532 carries the phosphothreonine modification. A Nuclear localization signal motif is present at residues 534-540 (TLKKRSR). Residues 542 to 557 (GRGETTKPEEGTERPE) are compositionally biased toward basic and acidic residues. Residue arginine 543 is modified to Omega-N-methylarginine.

Belongs to the TRAFAC class translation factor GTPase superfamily. Classic translation factor GTPase family. SelB subfamily. Mg(2+) serves as cofactor. Mn(2+) is required as a cofactor.

It localises to the cytoplasm. Its subcellular location is the nucleus. The enzyme catalyses GTP + H2O = GDP + phosphate + H(+). In terms of biological role, translation factor required for the incorporation of the rare amino acid selenocysteine encoded by UGA codons. Replaces the eRF1-eRF3-GTP ternary complex for the insertion of selenocysteine directed by the UGA codon. Insertion of selenocysteine at UGA codons is mediated by SECISBP2 and EEFSEC: SECISBP2 (1) specifically binds the SECIS sequence once the 80S ribosome encounters an in-frame UGA codon and (2) contacts the RPS27A/eS31 of the 40S ribosome before ribosome stalling. (3) GTP-bound EEFSEC then delivers selenocysteinyl-tRNA(Sec) to the 80S ribosome and adopts a preaccommodated state conformation. (4) After GTP hydrolysis, EEFSEC dissociates from the assembly, selenocysteinyl-tRNA(Sec) accommodates, and peptide bond synthesis and selenoprotein elongation occur. The polypeptide is Selenocysteine-specific elongation factor (Eefsec) (Mus musculus (Mouse)).